Consider the following 134-residue polypeptide: Ribulose bisphosphate carboxylase small subunit (134 aa).

Belongs to the RuBisCO small chain family. In terms of assembly, heterohexadecamer of 8 large and 8 small subunits.

Functionally, ruBisCO catalyzes two reactions: the carboxylation of D-ribulose 1,5-bisphosphate, the primary event in carbon dioxide fixation, as well as the oxidative fragmentation of the pentose substrate. Both reactions occur simultaneously and in competition at the same active site. Although the small subunit is not catalytic it is essential for maximal activity. This Bradyrhizobium diazoefficiens (strain JCM 10833 / BCRC 13528 / IAM 13628 / NBRC 14792 / USDA 110) protein is Ribulose bisphosphate carboxylase small subunit.